We begin with the raw amino-acid sequence, 790 residues long: uncharacterized protein (790 aa).

The TBDR plug domain maps to 37–172 (APVPVPVNGN…NGGVIDAKIK (136 aa)). Positions 178 to 790 (DSKVKLGYRT…TFWLDVSMKF (613 aa)) constitute a TBDR beta-barrel domain.

It belongs to the TonB-dependent receptor family.

It localises to the cell outer membrane. This is an uncharacterized protein from Escherichia coli (strain K12).